A 676-amino-acid chain; its full sequence is DNA ligase (676 aa).

Residues 42-46, 91-92, and E121 each bind NAD(+); these read DDVYD and SL. The active-site N6-AMP-lysine intermediate is K123. NAD(+) contacts are provided by R144, E178, K294, and K318. Zn(2+) contacts are provided by C412, C415, C430, and C435. Residues 596–676 form the BRCT domain; that stretch reads NSTSEFTGKR…QLQAAMDETK (81 aa).

It belongs to the NAD-dependent DNA ligase family. LigA subfamily. Mg(2+) is required as a cofactor. Requires Mn(2+) as cofactor.

The enzyme catalyses NAD(+) + (deoxyribonucleotide)n-3'-hydroxyl + 5'-phospho-(deoxyribonucleotide)m = (deoxyribonucleotide)n+m + AMP + beta-nicotinamide D-nucleotide.. In terms of biological role, DNA ligase that catalyzes the formation of phosphodiester linkages between 5'-phosphoryl and 3'-hydroxyl groups in double-stranded DNA using NAD as a coenzyme and as the energy source for the reaction. It is essential for DNA replication and repair of damaged DNA. This Levilactobacillus brevis (strain ATCC 367 / BCRC 12310 / CIP 105137 / JCM 1170 / LMG 11437 / NCIMB 947 / NCTC 947) (Lactobacillus brevis) protein is DNA ligase.